We begin with the raw amino-acid sequence, 358 residues long: Glucose 1-dehydrogenase (358 aa).

C38 provides a ligand contact to Zn(2+). A substrate-binding site is contributed by T40. Residues H65, E66, C92, C95, C98, and C106 each coordinate Zn(2+). Substrate contacts are provided by E113, E149, and N153. E149 provides a ligand contact to Zn(2+). Residues 187–190, 209–211, 268–270, 296–298, and K342 each bind NADP(+); these read SGPI, NRR, FGT, and SVN. N298 lines the substrate pocket.

The protein belongs to the zinc-containing alcohol dehydrogenase family. Glucose 1-dehydrogenase subfamily. The cofactor is Zn(2+).

The catalysed reaction is D-glucose + NAD(+) = D-glucono-1,5-lactone + NADH + H(+). It catalyses the reaction D-glucose + NADP(+) = D-glucono-1,5-lactone + NADPH + H(+). In terms of biological role, catalyzes the NAD(P)(+)-dependent oxidation of D-glucose to D-gluconate via gluconolactone. Can utilize both NAD(+) and NADP(+) as electron acceptor. Is involved in the degradation of glucose through a non-phosphorylative variant of the Entner-Doudoroff pathway. The sequence is that of Glucose 1-dehydrogenase from Metallosphaera sedula (strain ATCC 51363 / DSM 5348 / JCM 9185 / NBRC 15509 / TH2).